The primary structure comprises 146 residues: D-aminoacyl-tRNA deacylase (146 aa).

Positions 137-138 (GP) match the Gly-cisPro motif, important for rejection of L-amino acids motif.

The protein belongs to the DTD family. Homodimer.

It localises to the cytoplasm. It carries out the reaction glycyl-tRNA(Ala) + H2O = tRNA(Ala) + glycine + H(+). It catalyses the reaction a D-aminoacyl-tRNA + H2O = a tRNA + a D-alpha-amino acid + H(+). Its function is as follows. An aminoacyl-tRNA editing enzyme that deacylates mischarged D-aminoacyl-tRNAs. Also deacylates mischarged glycyl-tRNA(Ala), protecting cells against glycine mischarging by AlaRS. Acts via tRNA-based rather than protein-based catalysis; rejects L-amino acids rather than detecting D-amino acids in the active site. By recycling D-aminoacyl-tRNA to D-amino acids and free tRNA molecules, this enzyme counteracts the toxicity associated with the formation of D-aminoacyl-tRNA entities in vivo and helps enforce protein L-homochirality. The polypeptide is D-aminoacyl-tRNA deacylase (Deinococcus deserti (strain DSM 17065 / CIP 109153 / LMG 22923 / VCD115)).